A 377-amino-acid chain; its full sequence is Chaperone protein DnaJ (377 aa).

Positions 5–70 constitute a J domain; that stretch reads DYYQILGIPK…EKRSAYDQYG (66 aa). Residues 132–210 form a CR-type zinc finger; the sequence is GIKKEIQIPT…CHGQGRVETY (79 aa). Residues Cys-145, Cys-148, Cys-162, Cys-165, Cys-184, Cys-187, Cys-198, and Cys-201 each contribute to the Zn(2+) site. 4 CXXCXGXG motif repeats span residues 145-152, 162-169, 184-191, and 198-205; these read CKTCYGSG, CSTCHGKG, CPTCHGKG, and CNLCHGQG.

It belongs to the DnaJ family. In terms of assembly, homodimer. Zn(2+) serves as cofactor.

Its subcellular location is the cytoplasm. In terms of biological role, participates actively in the response to hyperosmotic and heat shock by preventing the aggregation of stress-denatured proteins and by disaggregating proteins, also in an autonomous, DnaK-independent fashion. Unfolded proteins bind initially to DnaJ; upon interaction with the DnaJ-bound protein, DnaK hydrolyzes its bound ATP, resulting in the formation of a stable complex. GrpE releases ADP from DnaK; ATP binding to DnaK triggers the release of the substrate protein, thus completing the reaction cycle. Several rounds of ATP-dependent interactions between DnaJ, DnaK and GrpE are required for fully efficient folding. Also involved, together with DnaK and GrpE, in the DNA replication of plasmids through activation of initiation proteins. The sequence is that of Chaperone protein DnaJ from Buchnera aphidicola subsp. Acyrthosiphon pisum (strain Tuc7).